We begin with the raw amino-acid sequence, 96 residues long: Co-chaperonin GroES (96 aa).

It belongs to the GroES chaperonin family. As to quaternary structure, heptamer of 7 subunits arranged in a ring. Interacts with the chaperonin GroEL.

It localises to the cytoplasm. Its function is as follows. Together with the chaperonin GroEL, plays an essential role in assisting protein folding. The GroEL-GroES system forms a nano-cage that allows encapsulation of the non-native substrate proteins and provides a physical environment optimized to promote and accelerate protein folding. GroES binds to the apical surface of the GroEL ring, thereby capping the opening of the GroEL channel. The protein is Co-chaperonin GroES of Thiobacillus denitrificans (strain ATCC 25259 / T1).